The primary structure comprises 627 residues: Neuronal acetylcholine receptor subunit alpha-4 (627 aa).

The N-terminal stretch at Met1–Pro31 is a signal peptide. The Extracellular segment spans residues Val32–Leu244. An N-linked (GlcNAc...) asparagine glycan is attached at Asn59. Positions 78 and 80 each coordinate Ca(2+). Asn109 and Asn176 each carry an N-linked (GlcNAc...) asparagine glycan. 2 disulfides stabilise this stretch: Cys163/Cys177 and Cys227/Cys228. Residues Pro245–Leu269 traverse the membrane as a helical segment. Cys273 carries the S-palmitoyl cysteine lipid modification. 2 helical membrane passes run Val277–Thr295 and Tyr311–Val332. The Cytoplasmic segment spans residues His333 to Arg600. Residues Pro384–Gly399 show a composition bias toward low complexity. Residues Pro384–Leu463 form a disordered region. At Ser427 the chain carries Phosphoserine. Residues Ser444–Thr458 show a composition bias toward pro residues. Ser541 bears the Phosphoserine mark. A helical transmembrane segment spans residues Ile601–Leu619.

The protein belongs to the ligand-gated ion channel (TC 1.A.9) family. Acetylcholine receptor (TC 1.A.9.1) subfamily. Alpha-4/CHRNA4 sub-subfamily. In terms of assembly, neuronal AChR is composed of two different types of subunits: alpha and beta. CHRNA4 forms heteropentameric neuronal acetylcholine receptors with CHRNB2 and CHRNB4, as well as CHRNA5 and CHRNB3 as accesory subunits. Found in two major stoichiometric forms, LS (low agonist sensitivity): (CHRNA4)3:(CHRNB2)2 and HS (high agonist sensitivity): (CHRNA4)2:(CHRNB2)3, the two stoichiometric forms differ in their unitary conductance, calcium permeability, ACh sensitivity and potentiation by divalent cation. Cells produce predominantly an (CHRNA4)3:(CHRNB2)2 nAChR. The (CHRNA4)2:(CHRNB2)3 expression is selectively up-regulated by nicotine and has lower single channel conductance and calcium permeability. In the striatum, also forms CHRNA4:CHRNA6:CHRNB2 complexes. Also found in the stoichiometric form: (CHRNA4:CHRNB2)2:CHRNB3. Interacts with RIC3; which is required for proper folding and assembly. Interacts with LYPD6.

Its subcellular location is the synaptic cell membrane. The protein localises to the cell membrane. It catalyses the reaction Ca(2+)(in) = Ca(2+)(out). It carries out the reaction K(+)(in) = K(+)(out). The enzyme catalyses Na(+)(in) = Na(+)(out). With respect to regulation, activated by a myriad of ligands such as acetylcholine, cytisine, nicotine, choline and epibatidine. Channel potentiation by calcium is stoichiometry-selective, CHRNA4:CHRNB2 nACh receptor is achieved by calcium association with topographically distinct sites framed by anionic residues within the CHRNA4 subunit and between the CHRNA4 and CHRNB2 subunits. nAChR activity is inhibited by the antagonist alpha-conotoxins BuIA, PnIA, GID and MII, small disulfide-constrained peptides from cone snails. Its function is as follows. Component of neuronal acetylcholine receptors (nAChRs) that function as pentameric, ligand-gated cation channels with high calcium permeability among other activities. nAChRs are excitatory neurotrasnmitter receptors formed by a collection of nAChR subunits known to mediate synaptic transmission in the nervous system and the neuromuscular junction. Each nAchR subunit confers differential attributes to channel properties, including activation, deactivation and desensitization kinetics, pH sensitivity, cation permeability, and binding to allosteric modulators. CHRNA4 forms heteropentameric neuronal acetylcholine receptors with CHRNB2 and CHRNB4, as well as CHRNA5 and CHRNB3 as accesory subunits. Is the most abundant nAChR subtype expressed in the central nervous system. Found in two major stoichiometric forms,(CHRNA4)3:(CHRNB2)2 and (CHRNA4)2:(CHRNB2)3, the two stoichiometric forms differ in their unitary conductance, calcium permeability, ACh sensitivity and potentiation by divalent cation. Involved in the modulation of calcium-dependent signaling pathways, influences the release of neurotransmitters, including dopamine, glutamate and GABA. The protein is Neuronal acetylcholine receptor subunit alpha-4 (CHRNA4) of Mustela putorius furo (European domestic ferret).